A 113-amino-acid chain; its full sequence is Large ribosomal subunit protein uL22 (113 aa).

Belongs to the universal ribosomal protein uL22 family. Part of the 50S ribosomal subunit.

Functionally, this protein binds specifically to 23S rRNA; its binding is stimulated by other ribosomal proteins, e.g. L4, L17, and L20. It is important during the early stages of 50S assembly. It makes multiple contacts with different domains of the 23S rRNA in the assembled 50S subunit and ribosome. In terms of biological role, the globular domain of the protein is located near the polypeptide exit tunnel on the outside of the subunit, while an extended beta-hairpin is found that lines the wall of the exit tunnel in the center of the 70S ribosome. The chain is Large ribosomal subunit protein uL22 from Bacillus pumilus (strain SAFR-032).